Here is a 127-residue protein sequence, read N- to C-terminus: Protein MGF 110-14L (127 aa).

A signal peptide spans 1-17 (MKVLLELLLGYSVHILA).

It belongs to the asfivirus MGF 110 family.

Its function is as follows. Plays a role in virus cell tropism, and may be required for efficient virus replication in macrophages. The polypeptide is Protein MGF 110-14L (Ornithodoros (relapsing fever ticks)).